The chain runs to 154 residues: Transcriptional repressor NrdR (154 aa).

A zinc finger spans residues 3–34 (CPTCKYNGTRVVDSRPADDGNSIRRRRECEKC). The ATP-cone domain occupies 49–139 (LIVVKKDGAR…VYRQFKDISV (91 aa)).

It belongs to the NrdR family. It depends on Zn(2+) as a cofactor.

In terms of biological role, negatively regulates transcription of bacterial ribonucleotide reductase nrd genes and operons by binding to NrdR-boxes. The protein is Transcriptional repressor NrdR of Listeria welshimeri serovar 6b (strain ATCC 35897 / DSM 20650 / CCUG 15529 / CIP 8149 / NCTC 11857 / SLCC 5334 / V8).